The following is a 909-amino-acid chain: Golgin subfamily A member 6-like protein 2 (909 aa).

A compositionally biased stretch (pro residues) spans 1–11 (MWPQPHLPPHP). Disordered regions lie at residues 1–88 (MWPQ…ASHQ), 300–362 (ERLR…EQEE), 381–408 (QEKQMREQEQKMRDQEERMWEQDERLRE), 425–494 (KMRE…QRLP), and 524–909 (EEMW…QSSL). Residues 13–31 (MSEKTRQNKLAEAKKKFTD) are compositionally biased toward basic and acidic residues. The segment covering 53–77 (NNGTNPETTTSEGCHSPEDTQQNRA) has biased composition (polar residues). Residues 78–88 (QLKEEKKASHQ) are compositionally biased toward basic and acidic residues. A coiled-coil region spans residues 192-526 (HKKADRYIEE…EEKIRDQEEM (335 aa)). 2 stretches are compositionally biased toward basic and acidic residues: residues 425–478 (KMRE…KQEE) and 524–542 (EEMWGQEKKMWRQEKMREQ). The segment covering 607 to 620 (AGGEEDAGAGEEDM) has biased composition (acidic residues). Gly residues-rich tracts occupy residues 641-654 (GGGGDDAGAGGEDA) and 676-689 (GAGGEDVGAGGEDV). The span at 692 to 719 (GRRRCGSSRGCRNRRRSCGNTRRCRSRR) shows a compositional bias: basic residues. Over residues 746-755 (AGAEDVAAGG) the composition is skewed to low complexity. Residues 757-766 (DAGEEEDAGG) show a composition bias toward acidic residues. Positions 791–871 (GAGGEDVGAG…AGGEDVGAGG (81 aa)) are enriched in gly residues. Positions 872-892 (DAREGGEDTRSEREDAGEAAR) are enriched in basic and acidic residues.

The protein belongs to the GOLGA6 family.

This chain is Golgin subfamily A member 6-like protein 2 (GOLGA6L2), found in Homo sapiens (Human).